A 35-amino-acid polypeptide reads, in one-letter code: uncharacterized protein (35 aa).

This is an uncharacterized protein from Haemophilus influenzae (strain ATCC 51907 / DSM 11121 / KW20 / Rd).